A 393-amino-acid chain; its full sequence is F-box protein KIB4 (393 aa).

An F-box domain is found at 12–59 (AKQPILVLDLVRLVLERLSFVDFHRARCVSSVWYSASKSCIGGTNPTA).

The protein resides in the cytoplasm. Its subcellular location is the nucleus. It is found in the nucleolus. In terms of biological role, component of SCF(ASK-cullin-F-box) E3 ubiquitin ligase complexes, which may mediate the ubiquitination and subsequent proteasomal degradation of target proteins. Required for brassinosteroid (BR) signal transduction. Mediates ASK7/BIN2/SK21 inactivation both by competing with substrate binding (e.g. BZR1) and by promoting its ubiquitination and subsequent proteasomal degradation. The protein is F-box protein KIB4 of Arabidopsis thaliana (Mouse-ear cress).